A 207-amino-acid polypeptide reads, in one-letter code: Outer-membrane lipoprotein LolB (207 aa).

An N-terminal signal peptide occupies residues methionine 1–alanine 21. A lipid anchor (N-palmitoyl cysteine) is attached at cysteine 22. Cysteine 22 carries S-diacylglycerol cysteine lipidation.

It belongs to the LolB family. Monomer.

The protein resides in the cell outer membrane. Functionally, plays a critical role in the incorporation of lipoproteins in the outer membrane after they are released by the LolA protein. This Salmonella agona (strain SL483) protein is Outer-membrane lipoprotein LolB.